We begin with the raw amino-acid sequence, 510 residues long: Probable cytosol aminopeptidase (510 aa).

Mn(2+) contacts are provided by lysine 268 and aspartate 273. The active site involves lysine 280. Mn(2+) is bound by residues aspartate 291, aspartate 350, and glutamate 352. Arginine 354 is a catalytic residue.

The protein belongs to the peptidase M17 family. Requires Mn(2+) as cofactor.

Its subcellular location is the cytoplasm. The catalysed reaction is Release of an N-terminal amino acid, Xaa-|-Yaa-, in which Xaa is preferably Leu, but may be other amino acids including Pro although not Arg or Lys, and Yaa may be Pro. Amino acid amides and methyl esters are also readily hydrolyzed, but rates on arylamides are exceedingly low.. The enzyme catalyses Release of an N-terminal amino acid, preferentially leucine, but not glutamic or aspartic acids.. Its function is as follows. Presumably involved in the processing and regular turnover of intracellular proteins. Catalyzes the removal of unsubstituted N-terminal amino acids from various peptides. The sequence is that of Probable cytosol aminopeptidase from Micrococcus luteus (strain ATCC 4698 / DSM 20030 / JCM 1464 / CCM 169 / CCUG 5858 / IAM 1056 / NBRC 3333 / NCIMB 9278 / NCTC 2665 / VKM Ac-2230) (Micrococcus lysodeikticus).